Consider the following 229-residue polypeptide: Extracellular endonuclease (229 aa).

The signal sequence occupies residues 1 to 19; that stretch reads MSARFIAVFCLFFTVTAHA. Residues 69–95 form a disordered region; the sequence is RADASNGNTSSRPGRSGISASAGKPVG. Positions 71-81 are enriched in polar residues; sequence DASNGNTSSRP.

Belongs to the EndA/NucM nuclease family.

It localises to the secreted. This is Extracellular endonuclease (endX) from Pseudomonas fluorescens biotype A.